Reading from the N-terminus, the 988-residue chain is Band 4.1-like protein 2 (988 aa).

The segment at 1–190 (MTTEVGSASE…GAAKRETKEV (190 aa)) is disordered. Thr-2 carries the N-acetylthreonine modification. Position 7 is a phosphoserine (Ser-7). Basic and acidic residues predominate over residues 22-31 (ASKEKAKEVE). Ser-38, Ser-86, and Ser-116 each carry phosphoserine. Basic and acidic residues-rich tracts occupy residues 110–148 (ILGK…EAKP) and 160–190 (EEVR…TKEV). Residues Ser-201, Ser-379, Ser-395, Ser-492, Ser-543, Ser-555, Ser-561, and Ser-582 each carry the phosphoserine modification. The FERM domain occupies 211–492 (VLAKVTLLDG…EHHTFYRLVS (282 aa)). A hydrophilic region spans residues 495 to 651 (QPPKTKFLTL…TPEPRPSEWE (157 aa)). The tract at residues 514–594 (TQAQTREAST…KATPLPAEGK (81 aa)) is disordered. Positions 555–567 (SPPGEGSVPGPGV) are enriched in low complexity. Tyr-606 is subject to Phosphotyrosine. 2 positions are modified to phosphoserine: Ser-610 and Ser-630. Disordered stretches follow at residues 639 to 788 (MAST…QAGA) and 804 to 839 (QKLP…VPHL). The interval 652-837 (KRRVTPLPFQ…DPHRVNGEVP (186 aa)) is spectrin--actin-binding. Over residues 673–686 (VEEKKRAEVGKDES) the composition is skewed to basic and acidic residues. Ser-698 carries the post-translational modification Phosphoserine. The span at 704-717 (GETRKVEPVAHKDS) shows a compositional bias: basic and acidic residues. Residues 718–729 (TSLSSESSSSSS) are compositionally biased toward low complexity. Over residues 739 to 751 (QPHHRVTEGTIRE) the composition is skewed to basic and acidic residues. Position 745 is a phosphothreonine (Thr-745). Acidic residues predominate over residues 752-764 (EQEECDEELEEEP). The span at 828 to 839 (DPHRVNGEVPHL) shows a compositional bias: basic and acidic residues. Residues 838–988 (HLDLDGLPEI…ETELAEEGEE (151 aa)) are C-terminal (CTD).

Interacts with FCGR1A. Interacts with TRPC4. Interacts (via CTD domain) with FKBP2. Interacts with NUMA1; this interaction is negatively regulated by CDK1 during metaphase and promotes anaphase-specific localization of NUMA1 in symmetrically dividing cells. As to expression, widely expressed.

It is found in the cytoplasm. It localises to the cytoskeleton. The protein resides in the cell cortex. The protein localises to the cell membrane. Its function is as follows. Required for dynein-dynactin complex and NUMA1 recruitment at the mitotic cell cortex during anaphase. This is Band 4.1-like protein 2 from Mus musculus (Mouse).